The chain runs to 234 residues: MVSFIFTRIILFAAAINGAVALPMNTTEPEDFSILSRSGTPSSTGYSNGYYYSWWTDGAAQATYANGGGGQYSLNWSGNNGNLVGGKGWNPGFNGRVIQYSGTYQPNGNSYLSVYGWTLNPLIEYYIVESYGSYNPSSAAARKGSVNCDGANYDILTTTRYNEPSINGTQTFQQFWSVRNPKKNPGGSISGSVSTGCHFTAWGNLGMNLGSTWNYQIVATEGYQSSGFSSITVA.

Residues 1-21 form the signal peptide; it reads MVSFIFTRIILFAAAINGAVA. Residues Asn-25 and Asn-75 are each glycosylated (N-linked (GlcNAc...) asparagine). Residues 38–234 enclose the GH11 domain; that stretch reads SGTPSSTGYS…SSGFSSITVA (197 aa). Glu-124 (nucleophile) is an active-site residue. An N-linked (GlcNAc...) asparagine glycan is attached at Asn-167. The active-site Proton donor is Glu-221.

Belongs to the glycosyl hydrolase 11 (cellulase G) family.

It is found in the secreted. The enzyme catalyses Endohydrolysis of (1-&gt;4)-beta-D-xylosidic linkages in xylans.. It functions in the pathway glycan degradation; xylan degradation. Endo-1,4-beta-xylanase involved in the hydrolysis of xylan, a major structural heterogeneous polysaccharide found in plant biomass representing the second most abundant polysaccharide in the biosphere, after cellulose. In Leucoagaricus gongylophorus (Leaf-cutting ant fungus), this protein is Endo-1,4-beta-xylanase 1 (Xyn1).